We begin with the raw amino-acid sequence, 415 residues long: Peptide chain release factor subunit 1-2 (415 aa).

This sequence belongs to the eukaryotic release factor 1 family. In terms of assembly, heterodimer of two subunits, one of which binds GTP.

It localises to the cytoplasm. Functionally, directs the termination of nascent peptide synthesis (translation) in response to the termination codons UAA, UAG and UGA. This chain is Peptide chain release factor subunit 1-2, found in Methanosarcina acetivorans (strain ATCC 35395 / DSM 2834 / JCM 12185 / C2A).